Consider the following 333-residue polypeptide: tRNA (guanine(37)-N(1))/4-demethylwyosine(37)-methyltransferase Taw22 (333 aa).

S-adenosyl-L-methionine is bound by residues Arg174, Phe191, 213-214 (EI), and 243-244 (DV).

Belongs to the class I-like SAM-binding methyltransferase superfamily. TRM5/TYW2 family.

The protein localises to the cytoplasm. It carries out the reaction guanosine(37) in tRNA + S-adenosyl-L-methionine = N(1)-methylguanosine(37) in tRNA + S-adenosyl-L-homocysteine + H(+). The enzyme catalyses 4-demethylwyosine(37) in tRNA(Phe) + S-adenosyl-L-methionine = isowyosine(37) in tRNA(Phe) + S-adenosyl-L-homocysteine + H(+). Catalyzes both the N1-methylation of guanosine and the C7-methylation of 4-demethylwyosine (imG-14) at position 37 in tRNA(Phe). This Pyrococcus abyssi (strain GE5 / Orsay) protein is tRNA (guanine(37)-N(1))/4-demethylwyosine(37)-methyltransferase Taw22.